The following is an 82-amino-acid chain: Cytochrome b559 subunit alpha (82 aa).

A helical membrane pass occupies residues 22–36; sequence VIHAVTLPSIFLAGF. H24 provides a ligand contact to heme.

This sequence belongs to the PsbE/PsbF family. In terms of assembly, heterodimer of an alpha subunit and a beta subunit. PSII is composed of 1 copy each of membrane proteins PsbA, PsbB, PsbC, PsbD, PsbE, PsbF, PsbH, PsbI, PsbJ, PsbK, PsbL, PsbM, PsbT, PsbX, PsbY, PsbZ, Psb30/Ycf12, peripheral proteins PsbO, CyanoQ (PsbQ), PsbU, PsbV and a large number of cofactors. It forms dimeric complexes. Heme b serves as cofactor.

Its subcellular location is the cellular thylakoid membrane. In terms of biological role, this b-type cytochrome is tightly associated with the reaction center of photosystem II (PSII). PSII is a light-driven water:plastoquinone oxidoreductase that uses light energy to abstract electrons from H(2)O, generating O(2) and a proton gradient subsequently used for ATP formation. It consists of a core antenna complex that captures photons, and an electron transfer chain that converts photonic excitation into a charge separation. In Synechococcus sp. (strain CC9605), this protein is Cytochrome b559 subunit alpha.